The following is a 1379-amino-acid chain: MKAPTVLAPGILVLLLSLVQRSHGECKEALVKSEMNVNMKYQLPNFTAETPIQNVVLHGHHIYLGATNYIYVLNDKDLQKVSEFKTGPVLEHPDCLPCRDCSSKANSSGGVWKDNINMALLVDTYYDDQLISCGSVNRGTCQRHVLPPDNSADIQSEVHCMFSPEEESGQCPDCVVSALGAKVLLSEKDRFINFFVGNTINSSYPPGYSLHSISVRRLKETQDGFKFLTDQSYIDVLPEFLDSYPIKYIHAFESNHFIYFLTVQKETLDAQTFHTRIIRFCSVDSGLHSYMEMPLECILTEKRRKRSTREEVFNILQAAYVSKPGANLAKQIGASPSDDILFGVFAQSKPDSAEPVNRSAVCAFPIKYVNDFFNKIVNKNNVRCLQHFYGPNHEHCFNRTLLRNSSGCEARSDEYRTEFTTALQRVDLFMGRLNQVLLTSISTFIKGDLTIANLGTSEGRFMQVVLSRTAHLTPHVNFLLDSHPVSPEVIVEHPSNQNGYTLVVTGKKITKIPLNGLGCGHFQSCSQCLSAPYFIQCGWCHNQCVRFDECPSGTWTQEICLPAVYKVFPTSAPLEGGTVLTICGWDFGFRKNNKFDLRKTKVLLGNESCTLTLSESTTNTLKCTVGPAMSEHFNVSVIISNSRETTQYSAFSYVDPVITSISPRYGPQAGGTLLTLTGKYLNSGNSRHISIGGKTCTLKSVSDSILECYTPAQTTSDEFPVKLKIDLANRETSSFSYREDPVVYEIHPTKSFISGGSTITGIGKTLNSVSLPKLVIDVHEVGVNYTVACQHRSNSEIICCTTPSLKQLGLQLPLKTKAFFLLDGILSKHFDLTYVHNPVFEPFEKPVMISMGNENVVEIKGNNIDPEAVKGEVLKVGNQSCESLHWHSGAVLCTVPSDLLKLNSELNIEWKQAVSSTVLGKVIVQPDQNFAGLIIGAVSISVVVLLLSGLFLWMRKRKHKDLGSELVRYDARVHTPHLDRLVSARSVSPTTEMVSNESVDYRATFPEDQFPNSSQNGACRQVQYPLTDLSPILTSGDSDISSPLLQNTVHIDLSALNPELVQAVQHVVIGPSSLIVHFNEVIGRGHFGCVYHGTLLDNDGKKIHCAVKSLNRITDIEEVSQFLTEGIIMKDFSHPNVLSLLGICLRSEGSPLVVLPYMKHGDLRNFIRNETHNPTVKDLIGFGLQVAKGMKYLASKKFVHRDLAARNCMLDEKFTVKVADFGLARDMYDKEYYSVHNKTGAKLPVKWMALESLQTQKFTTKSDVWSFGVLLWELMTRGAPPYPDVNTFDITIYLLQGRRLLQPEYCPDALYEVMLKCWHPKAEMRPSFSELVSRISSIFSTFIGEHYVHVNATYVNVKCVAPYPSLLPSQDNIDGEGNT.

A signal peptide spans 1–24 (MKAPTVLAPGILVLLLSLVQRSHG). The Extracellular portion of the chain corresponds to 25–931 (ECKEALVKSE…VIVQPDQNFA (907 aa)). The 488-residue stretch at 27–514 (KEALVKSEMN…TGKKITKIPL (488 aa)) folds into the Sema domain. Asn-45 carries an N-linked (GlcNAc...) asparagine glycan. 4 disulfide bridges follow: Cys-95/Cys-101, Cys-98/Cys-160, Cys-133/Cys-141, and Cys-171/Cys-174. Asn-106 is a glycosylation site (N-linked (GlcNAc...) asparagine). 2 N-linked (GlcNAc...) asparagine glycosylation sites follow: Asn-201 and Asn-357. 2 disulfide bridges follow: Cys-297–Cys-362 and Cys-384–Cys-396. Residues Asn-398 and Asn-404 are each glycosylated (N-linked (GlcNAc...) asparagine). Intrachain disulfides connect Cys-519/Cys-537, Cys-525/Cys-560, Cys-528/Cys-544, and Cys-540/Cys-550. IPT/TIG domains are found at residues 562 to 654 (PAVY…FSYV), 656 to 738 (PVIT…FSYR), and 741 to 835 (PVVY…LTYV). An O-linked (Man) threonine glycan is attached at Thr-581. Residues Asn-606 and Asn-634 are each glycosylated (N-linked (GlcNAc...) asparagine). Residues Thr-675 and Thr-760 are each glycosylated (O-linked (Man) threonine). N-linked (GlcNAc...) asparagine glycosylation is found at Asn-784 and Asn-878. Residues 932-954 (GLIIGAVSISVVVLLLSGLFLWM) form a helical membrane-spanning segment. Residues 955-1379 (RKRKHKDLGS…QDNIDGEGNT (425 aa)) are Cytoplasmic-facing. A Phosphoserine modification is found at Ser-964. Phosphothreonine is present on Thr-975. Phosphoserine is present on residues Ser-988, Ser-995, and Ser-998. The residue at position 1001 (Tyr-1001) is a Phosphotyrosine. One can recognise a Protein kinase domain in the interval 1076–1343 (VHFNEVIGRG…RISSIFSTFI (268 aa)). ATP is bound by residues 1082–1090 (IGRGHFGCV) and Lys-1108. Residue Asp-1202 is the Proton acceptor of the active site. Residues 1210-1379 (LDEKFTVKVA…QDNIDGEGNT (170 aa)) form an interaction with RANBP9 region. Tyr-1228 is modified (phosphotyrosine). Phosphotyrosine; by autocatalysis is present on residues Tyr-1232 and Tyr-1233. Phosphothreonine is present on Thr-1287. Positions 1318–1357 (WHPKAEMRPSFSELVSRISSIFSTFIGEHYVHVNATYVNV) are interaction with MUC20. Phosphotyrosine; by autocatalysis is present on residues Tyr-1347 and Tyr-1354. A Phosphotyrosine modification is found at Tyr-1363.

The protein belongs to the protein kinase superfamily. Tyr protein kinase family. In terms of assembly, heterodimer made of an alpha chain (50 kDa) and a beta chain (145 kDa) which are disulfide linked. Binds PLXNB1. Interacts when phosphorylated with downstream effectors including STAT3, PIK3R1, SRC, PCLG1, GRB2 and GAB1. When phosphorylated at Tyr-1354, interacts with INPPL1/SHIP2. Interacts with RANBP9 and RANBP10. Interacts with INPP5D/SHIP1. Interacts with SPSB1, SPSB2, SPSB4 and probably SPSB3. SPSB1 binding occurs in the presence and in the absence of HGF, however HGF treatment has a positive effect on this interaction. Interacts with MUC20; prevents interaction with GRB2 and suppresses hepatocyte growth factor-induced cell proliferation. Interacts with GRB10. Interacts with PTPN1 and PTPN2. Interacts with HSP90AA1 and HSP90AB1; the interaction suppresses MET kinase activity. Interacts with tensin TNS3. Interacts (when phosphorylated) with tensin TNS4 (via SH2 domain); the interaction increases MET protein stability by inhibiting MET endocytosis and subsequent lysosomal degradation. (Microbial infection) Interacts with L.monocytogenes InlB. InlB probably dimerizes upon binding to MET, which encourages subsequent dimerization of MET. In terms of processing, autophosphorylated in response to ligand binding on Tyr-1232 and Tyr-1233 in the kinase domain leading to further phosphorylation of Tyr-1347 and Tyr-1354 in the C-terminal multifunctional docking site. Dephosphorylated by PTPRJ at Tyr-1347 and Tyr-1363. Dephosphorylated by PTPN1 and PTPN2. Ubiquitinated. Ubiquitination by CBL regulates MET endocytosis, resulting in decreasing plasma membrane receptor abundance, and in endosomal degradation and/or recycling of internalized receptors. Post-translationally, O-mannosylation of IPT/TIG domains by TMEM260 is required for protein maturation. O-mannosylated residues are composed of single mannose glycans that are not elongated or modified. In terms of processing, (Microbial infection) Tyrosine phosphorylation is stimulated by L.monocytogenes InlB.

The protein localises to the membrane. The enzyme catalyses L-tyrosyl-[protein] + ATP = O-phospho-L-tyrosyl-[protein] + ADP + H(+). With respect to regulation, in its inactive state, the C-terminal tail interacts with the catalytic domain and inhibits the kinase activity. Upon ligand binding, the C-terminal tail is displaced and becomes phosphorylated, thus increasing the kinase activity. Receptor tyrosine kinase that transduces signals from the extracellular matrix into the cytoplasm by binding to hepatocyte growth factor/HGF ligand. Regulates many physiological processes including proliferation, scattering, morphogenesis and survival. Ligand binding at the cell surface induces autophosphorylation of MET on its intracellular domain that provides docking sites for downstream signaling molecules. Following activation by ligand, interacts with the PI3-kinase subunit PIK3R1, PLCG1, SRC, GRB2, STAT3 or the adapter GAB1. Recruitment of these downstream effectors by MET leads to the activation of several signaling cascades including the RAS-ERK, PI3 kinase-AKT, or PLCgamma-PKC. The RAS-ERK activation is associated with the morphogenetic effects while PI3K/AKT coordinates prosurvival effects. During embryonic development, MET signaling plays a role in gastrulation, development and migration of neuronal precursors, angiogenesis and kidney formation. During skeletal muscle development, it is crucial for the migration of muscle progenitor cells and for the proliferation of secondary myoblasts. In adults, participates in wound healing as well as organ regeneration and tissue remodeling. Also promotes differentiation and proliferation of hematopoietic cells. May regulate cortical bone osteogenesis. In terms of biological role, (Microbial infection) Acts as a receptor for Listeria monocytogenes internalin InlB, mediating entry of the pathogen into cells. In Mus musculus (Mouse), this protein is Hepatocyte growth factor receptor (Met).